The primary structure comprises 65 residues: Large ribosomal subunit protein uL30 (65 aa).

This sequence belongs to the universal ribosomal protein uL30 family. As to quaternary structure, part of the 50S ribosomal subunit.

This is Large ribosomal subunit protein uL30 from Methylobacillus flagellatus (strain ATCC 51484 / DSM 6875 / VKM B-1610 / KT).